Reading from the N-terminus, the 385-residue chain is Flap endonuclease 1 (385 aa).

An N-domain region spans residues 1–104 (MGILGLSKLI…GELAKRAERR (104 aa)). Aspartate 34 contributes to the Mg(2+) binding site. Arginine 47 and arginine 70 together coordinate DNA. Residues aspartate 86, glutamate 158, glutamate 160, aspartate 179, and aspartate 181 each coordinate Mg(2+). The interval 122–253 (GIEKFNRRLV…KRAIELINTY (132 aa)) is I-domain. Glutamate 158 contributes to the DNA binding site. The DNA site is built by glycine 231 and aspartate 233. Aspartate 233 contributes to the Mg(2+) binding site. The tract at residues 336–344 (TQVRLDSFF) is interaction with PCNA. Residues 346-385 (TLPSTPNATNAAKRKADEAKKSANNKKAKTSGGGRGRRPK) form a disordered region. The segment covering 368–385 (ANNKKAKTSGGGRGRRPK) has biased composition (basic residues).

It belongs to the XPG/RAD2 endonuclease family. FEN1 subfamily. Interacts with PCNA. Three molecules of FEN1 bind to one PCNA trimer with each molecule binding to one PCNA monomer. PCNA stimulates the nuclease activity without altering cleavage specificity. Requires Mg(2+) as cofactor. Post-translationally, phosphorylated. Phosphorylation upon DNA damage induces relocalization to the nuclear plasma.

It is found in the nucleus. The protein localises to the nucleolus. It localises to the nucleoplasm. Its subcellular location is the mitochondrion. Structure-specific nuclease with 5'-flap endonuclease and 5'-3' exonuclease activities involved in DNA replication and repair. During DNA replication, cleaves the 5'-overhanging flap structure that is generated by displacement synthesis when DNA polymerase encounters the 5'-end of a downstream Okazaki fragment. It enters the flap from the 5'-end and then tracks to cleave the flap base, leaving a nick for ligation. Also involved in the long patch base excision repair (LP-BER) pathway, by cleaving within the apurinic/apyrimidinic (AP) site-terminated flap. Acts as a genome stabilization factor that prevents flaps from equilibrating into structures that lead to duplications and deletions. Also possesses 5'-3' exonuclease activity on nicked or gapped double-stranded DNA, and exhibits RNase H activity. Also involved in replication and repair of rDNA and in repairing mitochondrial DNA. The sequence is that of Flap endonuclease 1 from Drosophila sechellia (Fruit fly).